Consider the following 620-residue polypeptide: Chaperone protein HscA homolog (620 aa).

It belongs to the heat shock protein 70 family.

Its function is as follows. Chaperone involved in the maturation of iron-sulfur cluster-containing proteins. Has a low intrinsic ATPase activity which is markedly stimulated by HscB. This chain is Chaperone protein HscA homolog, found in Shewanella sp. (strain MR-4).